The chain runs to 82 residues: uncharacterized protein (82 aa).

Positions 1 to 20 (MMNLSPPFKSPSGSSRAGRR) are disordered.

This is an uncharacterized protein from Archaeoglobus fulgidus (strain ATCC 49558 / DSM 4304 / JCM 9628 / NBRC 100126 / VC-16).